The sequence spans 276 residues: Vitamin B12-binding protein (276 aa).

Residues 1–20 (MLVIRLIACTFLFITPSLLA) form the signal peptide. The Fe/B12 periplasmic-binding domain maps to 27-274 (RIISLAPHAT…QVCTYLKIAQ (248 aa)). Tyrosine 54 is a cyanocob(III)alamin binding site. Cysteines 187 and 267 form a disulfide.

This sequence belongs to the BtuF family. As to quaternary structure, the complex is composed of two ATP-binding proteins (BtuD), two transmembrane proteins (BtuC) and a solute-binding protein (BtuF).

Its subcellular location is the periplasm. Its function is as follows. Part of the ABC transporter complex BtuCDF involved in vitamin B12 import. Binds vitamin B12 and delivers it to the periplasmic surface of BtuC. In Vibrio cholerae serotype O1 (strain ATCC 39541 / Classical Ogawa 395 / O395), this protein is Vitamin B12-binding protein.